We begin with the raw amino-acid sequence, 1434 residues long: Inositol hexakisphosphate and diphosphoinositol-pentakisphosphate kinase 1 (1434 aa).

66–67 is a binding site for substrate; the sequence is KK. ATP contacts are provided by residues Arg147, Lys200, His207, Arg226, 250 to 253, and 259 to 261; these read EEFM and DVK. Position 226-227 (226-227) interacts with substrate; sequence RK. Substrate contacts are provided by Lys261 and Arg275. ATP is bound by residues Ser277, Asp322, and 334–336; that span reads DVN. 339-342 provides a ligand contact to substrate; that stretch reads SFVK. Residues 384–455 are polyphosphoinositide-binding domain; the sequence is PTTSGTMMEL…VLDITRLLLA (72 aa). A disordered region spans residues 916–1017; the sequence is EGSAPAGCGF…PTEMKQSGLG (102 aa). Ser941 and Ser984 each carry phosphoserine. The span at 1002 to 1017 shows a compositional bias: polar residues; that stretch reads FSSSRPPTEMKQSGLG. Phosphoserine occurs at positions 1034, 1070, 1142, and 1149. Disordered regions lie at residues 1133–1193, 1228–1251, and 1396–1434; these read NHQA…GFSD, ESTQ…DTEV, and TDNP…EDIS. Low complexity predominate over residues 1165-1183; it reads SSGPSSTVSSAGPSSPTTV. The segment covering 1403–1434 has biased composition (acidic residues); that stretch reads LSEETDLQAQEVSEEIDQEPEVVDELSNEDIS.

The protein belongs to the histidine acid phosphatase family. VIP1 subfamily.

It is found in the cytoplasm. Its subcellular location is the cytosol. The protein localises to the cell membrane. The enzyme catalyses 1D-myo-inositol hexakisphosphate + ATP = 1-diphospho-1D-myo-inositol 2,3,4,5,6-pentakisphosphate + ADP. It carries out the reaction 5-diphospho-1D-myo-inositol 1,2,3,4,6-pentakisphosphate + ATP + H(+) = 1,5-bis(diphospho)-1D-myo-inositol 2,3,4,6-tetrakisphosphate + ADP. Bifunctional inositol kinase that acts in concert with the IP6K kinases IP6K1, IP6K2 and IP6K3 to synthesize the diphosphate group-containing inositol pyrophosphates diphosphoinositol pentakisphosphate, PP-InsP5, and bis-diphosphoinositol tetrakisphosphate, (PP)2-InsP4. PP-InsP5 and (PP)2-InsP4, also respectively called InsP7 and InsP8, regulate a variety of cellular processes, including apoptosis, vesicle trafficking, cytoskeletal dynamics, exocytosis, insulin signaling and neutrophil activation. Phosphorylates inositol hexakisphosphate (InsP6) at position 1 to produce PP-InsP5 which is in turn phosphorylated by IP6Ks to produce (PP)2-InsP4. Alternatively, phosphorylates PP-InsP5 at position 1, produced by IP6Ks from InsP6, to produce (PP)2-InsP4. Activated when cells are exposed to hyperosmotic stress. The sequence is that of Inositol hexakisphosphate and diphosphoinositol-pentakisphosphate kinase 1 from Rattus norvegicus (Rat).